The sequence spans 284 residues: L-ribulose-5-phosphate 3-epimerase UlaE (284 aa).

It belongs to the L-ribulose-5-phosphate 3-epimerase family.

The enzyme catalyses L-ribulose 5-phosphate = L-xylulose 5-phosphate. It participates in cofactor degradation; L-ascorbate degradation; D-xylulose 5-phosphate from L-ascorbate: step 3/4. In terms of biological role, catalyzes the isomerization of L-xylulose-5-phosphate to L-ribulose-5-phosphate. Is involved in the anaerobic L-ascorbate utilization. The polypeptide is L-ribulose-5-phosphate 3-epimerase UlaE (Salmonella typhi).